The primary structure comprises 148 residues: Small ribosomal subunit protein uS12 (148 aa).

This sequence belongs to the universal ribosomal protein uS12 family. Part of the 30S ribosomal subunit.

In terms of biological role, with S4 and S5 plays an important role in translational accuracy. Located at the interface of the 30S and 50S subunits. The chain is Small ribosomal subunit protein uS12 from Methanocaldococcus jannaschii (strain ATCC 43067 / DSM 2661 / JAL-1 / JCM 10045 / NBRC 100440) (Methanococcus jannaschii).